The sequence spans 262 residues: Small ribosomal subunit protein uS2 (262 aa).

The interval Gly-224 to Ser-246 is disordered.

The protein belongs to the universal ribosomal protein uS2 family.

The protein is Small ribosomal subunit protein uS2 of Lacticaseibacillus casei (strain BL23) (Lactobacillus casei).